A 412-amino-acid polypeptide reads, in one-letter code: Indian hedgehog B protein (412 aa).

The N-terminal stretch at 1–23 is a signal peptide; the sequence is MRLSTAAALLTGFILAFSPAYDG. Cysteine 24 is lipidated: N-palmitoyl cysteine. Residues glutamate 89, glutamate 90, aspartate 95, threonine 125, glutamate 126, aspartate 129, and aspartate 131 each contribute to the Ca(2+) site. Histidine 140, aspartate 147, and histidine 182 together coordinate Zn(2+). The Cholesterol glycine ester moiety is linked to residue glycine 197.

Belongs to the hedgehog family. In terms of assembly, multimer. As to quaternary structure, interacts with BOC and CDON. Interacts with PTCH1. Interacts with glypican GPC3. Cholesterylation is required for N-product targeting to lipid rafts and multimerization. In terms of processing, the C-terminal domain displays an autoproteolysis activity and a cholesterol transferase activity. Both activities result in the cleavage of the full-length protein and covalent attachment of a cholesterol moiety to the C-terminal of the newly generated N-product. The N-product is the active species in both local and long-range signaling, whereas the C-product is degraded in the endoplasmic reticulum. Post-translationally, N-palmitoylation by HHAT of N-product is required for indian hedgehog protein N-product multimerization and full activity. In terms of tissue distribution, expressed exclusively in the notochord.

Its subcellular location is the cell membrane. The protein resides in the endoplasmic reticulum membrane. It localises to the golgi apparatus membrane. It is found in the secreted. It carries out the reaction glycyl-L-cysteinyl-[protein] + cholesterol + H(+) = [protein]-C-terminal glycyl cholesterol ester + N-terminal L-cysteinyl-[protein]. Its function is as follows. Signal involved in the early induction and patterning of anterodorsal ectoderm, nervous system and somites. It is involved in the regulation of endochondral skeleton formation, and the development of retinal pigment epithelium (RPE), photoreceptors and periocular tissues. Functionally, the C-terminal part of the indian hedgehog protein precursor displays an autoproteolysis and a cholesterol transferase activity. Both activities result in the cleavage of the full-length protein into two parts followed by the covalent attachment of a cholesterol moiety to the C-terminal of the newly generated N-product. Both activities occur in the endoplasmic reticulum. The dually lipidated indian hedgehog protein N-product is a morphogen which is essential for a variety of patterning events during development. Binds to the patched (PTCH1) receptor, which functions in association with smoothened (SMO), to activate the transcription of target genes. In the notochord, induces somite patterning and muscle pioneer differentiation. This is Indian hedgehog B protein (ihhb) from Danio rerio (Zebrafish).